A 398-amino-acid polypeptide reads, in one-letter code: Phosphoglycerate kinase (398 aa).

Residues 21–23 (DFN), Arg-36, 59–62 (HLGR), Arg-119, and Arg-157 each bind substrate. ATP contacts are provided by residues Lys-208, Gly-296, Glu-327, and 354–357 (GGDS).

This sequence belongs to the phosphoglycerate kinase family. As to quaternary structure, monomer.

It localises to the cytoplasm. The catalysed reaction is (2R)-3-phosphoglycerate + ATP = (2R)-3-phospho-glyceroyl phosphate + ADP. It participates in carbohydrate degradation; glycolysis; pyruvate from D-glyceraldehyde 3-phosphate: step 2/5. This chain is Phosphoglycerate kinase, found in Streptococcus pyogenes serotype M5 (strain Manfredo).